The primary structure comprises 513 residues: GMP synthase [glutamine-hydrolyzing] (513 aa).

Positions 9-198 (LILVLDFGSQ…VRRVCDCKGQ (190 aa)) constitute a Glutamine amidotransferase type-1 domain. Catalysis depends on Cys86, which acts as the Nucleophile. Residues His172 and Glu174 contribute to the active site. The GMPS ATP-PPase domain maps to 199-388 (WTMENFIEIE…LGIPEHLVWR (190 aa)). Position 226 to 232 (226 to 232 (SGGVDSS)) interacts with ATP.

Homodimer.

It carries out the reaction XMP + L-glutamine + ATP + H2O = GMP + L-glutamate + AMP + diphosphate + 2 H(+). It functions in the pathway purine metabolism; GMP biosynthesis; GMP from XMP (L-Gln route): step 1/1. In terms of biological role, catalyzes the synthesis of GMP from XMP. In Staphylococcus aureus (strain Mu3 / ATCC 700698), this protein is GMP synthase [glutamine-hydrolyzing].